The chain runs to 647 residues: tRNA 5-methylaminomethyl-2-thiouridine biosynthesis bifunctional protein MnmC (647 aa).

A tRNA (mnm(5)s(2)U34)-methyltransferase region spans residues methionine 1–serine 227. Positions valine 256–lysine 647 are FAD-dependent cmnm(5)s(2)U34 oxidoreductase.

The protein in the N-terminal section; belongs to the methyltransferase superfamily. tRNA (mnm(5)s(2)U34)-methyltransferase family. This sequence in the C-terminal section; belongs to the DAO family. It depends on FAD as a cofactor.

Its subcellular location is the cytoplasm. The catalysed reaction is 5-aminomethyl-2-thiouridine(34) in tRNA + S-adenosyl-L-methionine = 5-methylaminomethyl-2-thiouridine(34) in tRNA + S-adenosyl-L-homocysteine + H(+). Catalyzes the last two steps in the biosynthesis of 5-methylaminomethyl-2-thiouridine (mnm(5)s(2)U) at the wobble position (U34) in tRNA. Catalyzes the FAD-dependent demodification of cmnm(5)s(2)U34 to nm(5)s(2)U34, followed by the transfer of a methyl group from S-adenosyl-L-methionine to nm(5)s(2)U34, to form mnm(5)s(2)U34. In Leptospira interrogans serogroup Icterohaemorrhagiae serovar Lai (strain 56601), this protein is tRNA 5-methylaminomethyl-2-thiouridine biosynthesis bifunctional protein MnmC.